The chain runs to 417 residues: Solute carrier family 25 member 46-A (417 aa).

A compositionally biased stretch (basic and acidic residues) spans 1–13 (MQPRRPDRFDGLE). The tract at residues 1–90 (MQPRRPDRFD…AFGEENSNSA (90 aa)) is disordered. Over residues 31-41 (SSFPARSFSSS) the composition is skewed to low complexity. Residues 95 to 186 (QLNRFAGFGI…GILSEFTHLP (92 aa)) form a Solcar 1 repeat. 6 consecutive transmembrane segments (helical) span residues 102–122 (FGIGLASLFTENVLAHPCIVL), 162–182 (MGSTFIVQGISLGAEGILSEF), 198–218 (IGGHLLLKGLVYVIVTPFYSA), 257–277 (LLPLLVLTFPTVLHGILHYIV), 313–333 (FPELIANFAASLCADVLLYPL), and 382–402 (LGFYKGFGAVVVQYTLHAIVL). One copy of the Solcar 2 repeat lies at 310-415 (EDYFPELIAN…KIIYSSVVQT (106 aa)).

It belongs to the mitochondrial carrier (TC 2.A.29) family.

The protein localises to the mitochondrion outer membrane. Functionally, may play a role in mitochondrial dynamics by controlling mitochondrial membrane fission. The polypeptide is Solute carrier family 25 member 46-A (slc25a46-a) (Xenopus laevis (African clawed frog)).